We begin with the raw amino-acid sequence, 172 residues long: 3-hydroxydecanoyl-[acyl-carrier-protein] dehydratase (172 aa).

Histidine 71 is a catalytic residue.

The protein belongs to the thioester dehydratase family. FabA subfamily. Homodimer.

Its subcellular location is the cytoplasm. The catalysed reaction is a (3R)-hydroxyacyl-[ACP] = a (2E)-enoyl-[ACP] + H2O. It catalyses the reaction (3R)-hydroxydecanoyl-[ACP] = (2E)-decenoyl-[ACP] + H2O. The enzyme catalyses (2E)-decenoyl-[ACP] = (3Z)-decenoyl-[ACP]. Its pathway is lipid metabolism; fatty acid biosynthesis. In terms of biological role, necessary for the introduction of cis unsaturation into fatty acids. Catalyzes the dehydration of (3R)-3-hydroxydecanoyl-ACP to E-(2)-decenoyl-ACP and then its isomerization to Z-(3)-decenoyl-ACP. Can catalyze the dehydratase reaction for beta-hydroxyacyl-ACPs with saturated chain lengths up to 16:0, being most active on intermediate chain length. The protein is 3-hydroxydecanoyl-[acyl-carrier-protein] dehydratase of Salmonella choleraesuis (strain SC-B67).